Consider the following 176-residue polypeptide: 3-hydroxyanthranilate 3,4-dioxygenase (176 aa).

Arg44 provides a ligand contact to O2. 3 residues coordinate Fe cation: His48, Glu54, and His92. Glu54 is a binding site for substrate. Arg96 and Glu106 together coordinate substrate. Fe cation contacts are provided by Cys121, Cys124, Cys158, and Cys161.

Belongs to the 3-HAO family. In terms of assembly, homodimer. Fe(2+) serves as cofactor.

It carries out the reaction 3-hydroxyanthranilate + O2 = (2Z,4Z)-2-amino-3-carboxymuconate 6-semialdehyde. The protein operates within cofactor biosynthesis; NAD(+) biosynthesis; quinolinate from L-kynurenine: step 3/3. Functionally, catalyzes the oxidative ring opening of 3-hydroxyanthranilate to 2-amino-3-carboxymuconate semialdehyde, which spontaneously cyclizes to quinolinate. The protein is 3-hydroxyanthranilate 3,4-dioxygenase of Xanthomonas euvesicatoria pv. vesicatoria (strain 85-10) (Xanthomonas campestris pv. vesicatoria).